The following is a 124-amino-acid chain: Ribosome-binding factor A (124 aa).

Belongs to the RbfA family. As to quaternary structure, monomer. Binds 30S ribosomal subunits, but not 50S ribosomal subunits or 70S ribosomes.

It is found in the cytoplasm. One of several proteins that assist in the late maturation steps of the functional core of the 30S ribosomal subunit. Associates with free 30S ribosomal subunits (but not with 30S subunits that are part of 70S ribosomes or polysomes). Required for efficient processing of 16S rRNA. May interact with the 5'-terminal helix region of 16S rRNA. The protein is Ribosome-binding factor A of Buchnera aphidicola subsp. Schizaphis graminum (strain Sg).